The chain runs to 79 residues: Large ribosomal subunit protein uL29 (79 aa).

The protein belongs to the universal ribosomal protein uL29 family.

The polypeptide is Large ribosomal subunit protein uL29 (Nocardia farcinica (strain IFM 10152)).